The primary structure comprises 341 residues: Glyceraldehyde-3-phosphate dehydrogenase (341 aa).

Residues 11–12 (TI) and Gly110 contribute to the NAD(+) site. 139 to 141 (SCN) lines the D-glyceraldehyde 3-phosphate pocket. Catalysis depends on Cys140, which acts as the Nucleophile. Position 168 (Arg168) interacts with NAD(+). 194 to 195 (HG) is a D-glyceraldehyde 3-phosphate binding site. Position 302 (Gln302) interacts with NAD(+).

This sequence belongs to the glyceraldehyde-3-phosphate dehydrogenase family. In terms of assembly, homotetramer.

The protein resides in the cytoplasm. The enzyme catalyses D-glyceraldehyde 3-phosphate + phosphate + NADP(+) = (2R)-3-phospho-glyceroyl phosphate + NADPH + H(+). The catalysed reaction is D-glyceraldehyde 3-phosphate + phosphate + NAD(+) = (2R)-3-phospho-glyceroyl phosphate + NADH + H(+). Its pathway is carbohydrate degradation; glycolysis; pyruvate from D-glyceraldehyde 3-phosphate: step 1/5. The protein is Glyceraldehyde-3-phosphate dehydrogenase of Methanoculleus marisnigri (strain ATCC 35101 / DSM 1498 / JR1).